The chain runs to 529 residues: Interleukin-21 receptor (529 aa).

A signal peptide spans M1–S19. Cystine bridges form between C20–C109, C25–C35, and C65–C81. Residues C20–H237 lie on the Extracellular side of the membrane. 2 consecutive Fibronectin type-III domains span residues L21–I118 and K119–G228. Residues N73, N97, N104, N125, and N182 are each glycosylated (N-linked (GlcNAc...) asparagine). C-linked (Man) tryptophan glycosylation occurs at W214. The WSXWS motif signature appears at W214–S218. A helical transmembrane segment spans residues M238–L258. The Cytoplasmic portion of the chain corresponds to P259–S529. Residues I266–E274 carry the Box 1 motif motif. Positions T458–S529 are disordered.

It belongs to the type I cytokine receptor family. Type 4 subfamily. Heterodimer with the common gamma subunit. Associates with JAK1. In terms of processing, C-mannosylated at Trp-214 in the WSXWS motif, the sugar chain makes extensive hydrogen bonds with Asn-73 sugar, and bridges the two fibronectin domains transforming the V-shaped receptor into an A-frame. As to expression, selectively expressed in lymphoid tissues. Most highly expressed in thymus and spleen.

It is found in the membrane. Functionally, this is a receptor for interleukin-21. The chain is Interleukin-21 receptor (Il21r) from Mus musculus (Mouse).